An 831-amino-acid polypeptide reads, in one-letter code: uncharacterized protein (831 aa).

The Tele-phosphohistidine intermediate role is filled by histidine 787.

This sequence belongs to the PEP-utilizing enzyme family.

This is an uncharacterized protein from Bacillus subtilis (strain 168).